A 622-amino-acid chain; its full sequence is Kinesin-like protein KIFC1 (622 aa).

The disordered stretch occupies residues 1-88 (MKEALEPAKK…KRPGKRPDWD (88 aa)). Positions 32-41 (SSLSQPQGPT) are enriched in polar residues. The stretch at 95 to 264 (DLTEELKCYR…QELKGNIRVF (170 aa)) forms a coiled coil. In terms of domain architecture, Kinesin motor spans 260–612 (NIRVFCRVRP…LRFASKVNQC (353 aa)). A disordered region spans residues 279-323 (PGFLLFPHGPAGPSDPPTRLSLSRSDDRRSTLTRAPAPTTRHDFS). At Thr309 the chain carries Phosphothreonine. Residue 360-367 (GQTGSGKT) participates in ATP binding.

Belongs to the TRAFAC class myosin-kinesin ATPase superfamily. Kinesin family. NCD subfamily. In terms of assembly, binds NUBP1 and NUBP2. Interacts with PPP1R42.

It localises to the nucleus. The protein localises to the cytoplasm. Its subcellular location is the cytoskeleton. It is found in the microtubule organizing center. The protein resides in the centrosome. It localises to the spindle. The protein localises to the early endosome. Minus end-directed microtubule-dependent motor required for bipolar spindle formation. May contribute to movement of early endocytic vesicles. Regulates cilium formation and structure. This chain is Kinesin-like protein KIFC1, found in Cricetulus griseus (Chinese hamster).